The sequence spans 237 residues: Sugar fermentation stimulation protein homolog (237 aa).

The protein belongs to the SfsA family.

The sequence is that of Sugar fermentation stimulation protein homolog from Pseudomonas syringae pv. tomato (strain ATCC BAA-871 / DC3000).